A 356-amino-acid chain; its full sequence is Holliday junction branch migration complex subunit RuvB (356 aa).

The interval 4 to 190 (TDKLAAERII…FGIVARLEFY (187 aa)) is large ATPase domain (RuvB-L). ATP contacts are provided by residues Leu29, Arg30, Gly71, Lys74, Thr75, Thr76, 137 to 139 (EDY), Arg180, Tyr190, and Arg227. Mg(2+) is bound at residue Thr75. The segment at 191 to 261 (DAEQLSRIVR…VADAALAMLD (71 aa)) is small ATPAse domain (RuvB-S). Residues 264–356 (PVGFDLMDRK…NLWDTPDAEC (93 aa)) are head domain (RuvB-H). DNA contacts are provided by Arg300, Arg319, and Arg324.

The protein belongs to the RuvB family. As to quaternary structure, homohexamer. Forms an RuvA(8)-RuvB(12)-Holliday junction (HJ) complex. HJ DNA is sandwiched between 2 RuvA tetramers; dsDNA enters through RuvA and exits via RuvB. An RuvB hexamer assembles on each DNA strand where it exits the tetramer. Each RuvB hexamer is contacted by two RuvA subunits (via domain III) on 2 adjacent RuvB subunits; this complex drives branch migration. In the full resolvosome a probable DNA-RuvA(4)-RuvB(12)-RuvC(2) complex forms which resolves the HJ.

Its subcellular location is the cytoplasm. The catalysed reaction is ATP + H2O = ADP + phosphate + H(+). Its function is as follows. The RuvA-RuvB-RuvC complex processes Holliday junction (HJ) DNA during genetic recombination and DNA repair, while the RuvA-RuvB complex plays an important role in the rescue of blocked DNA replication forks via replication fork reversal (RFR). RuvA specifically binds to HJ cruciform DNA, conferring on it an open structure. The RuvB hexamer acts as an ATP-dependent pump, pulling dsDNA into and through the RuvAB complex. RuvB forms 2 homohexamers on either side of HJ DNA bound by 1 or 2 RuvA tetramers; 4 subunits per hexamer contact DNA at a time. Coordinated motions by a converter formed by DNA-disengaged RuvB subunits stimulates ATP hydrolysis and nucleotide exchange. Immobilization of the converter enables RuvB to convert the ATP-contained energy into a lever motion, pulling 2 nucleotides of DNA out of the RuvA tetramer per ATP hydrolyzed, thus driving DNA branch migration. The RuvB motors rotate together with the DNA substrate, which together with the progressing nucleotide cycle form the mechanistic basis for DNA recombination by continuous HJ branch migration. Branch migration allows RuvC to scan DNA until it finds its consensus sequence, where it cleaves and resolves cruciform DNA. This chain is Holliday junction branch migration complex subunit RuvB, found in Burkholderia pseudomallei (strain 668).